Reading from the N-terminus, the 232-residue chain is Protein shisa-3 (232 aa).

The N-terminal stretch at 1–19 (MRLLGCFFLIFLTWGSARA) is a signal peptide. The Lumenal segment spans residues 20-93 (QGEYCHGWLD…GVSAQPVYVP (74 aa)). Residues 94–114 (FLIVGSIFIAFIIVGSLVAVY) traverse the membrane as a helical segment. The Cytoplasmic segment spans residues 115–232 (CCTCLRPKQT…NKSCPDFRQS (118 aa)). A disordered region spans residues 146–185 (TSGNLRTPSRQSSTATSSTSTGGSVRRLSSSRADPGYLVS). Positions 151–177 (RTPSRQSSTATSSTSTGGSVRRLSSSR) are enriched in low complexity.

It belongs to the shisa family. As to quaternary structure, interacts with fzd8 and fgfr1.

The protein localises to the endoplasmic reticulum membrane. In terms of biological role, plays an essential role in the maturation of presomitic mesoderm cells by individual attenuation of both fgf and wnt signaling. Regulates head and somite developmen. Inhibits both wnt and fgf signaling through the regulation of protein maturation and cell surface transportation of their receptors within the endoplasmic reticulum. In Xenopus laevis (African clawed frog), this protein is Protein shisa-3 (shisa3).